Here is a 306-residue protein sequence, read N- to C-terminus: Acetyl-coenzyme A carboxylase carboxyl transferase subunit beta (306 aa).

The CoA carboxyltransferase N-terminal domain maps to 27–296 (LWHKCPSCEA…PRFVAPVIEP (270 aa)). Zn(2+) contacts are provided by Cys31, Cys34, Cys50, and Cys53. The segment at 31 to 53 (CPSCEAVLYRPELEKTLDVCPKC) adopts a C4-type zinc-finger fold.

Belongs to the AccD/PCCB family. Acetyl-CoA carboxylase is a heterohexamer composed of biotin carboxyl carrier protein (AccB), biotin carboxylase (AccC) and two subunits each of ACCase subunit alpha (AccA) and ACCase subunit beta (AccD). Requires Zn(2+) as cofactor.

It localises to the cytoplasm. It catalyses the reaction N(6)-carboxybiotinyl-L-lysyl-[protein] + acetyl-CoA = N(6)-biotinyl-L-lysyl-[protein] + malonyl-CoA. It participates in lipid metabolism; malonyl-CoA biosynthesis; malonyl-CoA from acetyl-CoA: step 1/1. In terms of biological role, component of the acetyl coenzyme A carboxylase (ACC) complex. Biotin carboxylase (BC) catalyzes the carboxylation of biotin on its carrier protein (BCCP) and then the CO(2) group is transferred by the transcarboxylase to acetyl-CoA to form malonyl-CoA. The chain is Acetyl-coenzyme A carboxylase carboxyl transferase subunit beta from Pseudomonas syringae pv. syringae (strain B728a).